Here is a 320-residue protein sequence, read N- to C-terminus: Methionyl-tRNA formyltransferase (320 aa).

114–117 is a (6S)-5,6,7,8-tetrahydrofolate binding site; it reads SLLP.

It belongs to the Fmt family.

It catalyses the reaction L-methionyl-tRNA(fMet) + (6R)-10-formyltetrahydrofolate = N-formyl-L-methionyl-tRNA(fMet) + (6S)-5,6,7,8-tetrahydrofolate + H(+). Its function is as follows. Attaches a formyl group to the free amino group of methionyl-tRNA(fMet). The formyl group appears to play a dual role in the initiator identity of N-formylmethionyl-tRNA by promoting its recognition by IF2 and preventing the misappropriation of this tRNA by the elongation apparatus. The chain is Methionyl-tRNA formyltransferase from Acinetobacter baumannii (strain AB307-0294).